Here is a 238-residue protein sequence, read N- to C-terminus: Ribosomal RNA small subunit methyltransferase G (238 aa).

S-adenosyl-L-methionine contacts are provided by residues glycine 78, phenylalanine 83, alanine 129–glutamate 130, and arginine 148. The segment at lysine 217–lysine 238 is disordered.

It belongs to the methyltransferase superfamily. RNA methyltransferase RsmG family.

The protein localises to the cytoplasm. Functionally, specifically methylates the N7 position of a guanine in 16S rRNA. This Lactococcus lactis subsp. cremoris (strain SK11) protein is Ribosomal RNA small subunit methyltransferase G.